The sequence spans 481 residues: Sestrin-1 (481 aa).

An N-terminal domain; may mediate the alkylhydroperoxide reductase activity region spans residues 63 to 244 (FADAFTDLGR…ICDITNGNHG (182 aa)). Catalysis depends on cysteine 122, which acts as the Cysteine sulfenic acid (-SOH) intermediate. Positions 295-316 (KTESMVFSTEDEDPPPDIDVSR) are disordered. A C-terminal domain; mediates TORC1 regulation region spans residues 310–481 (PDIDVSRHFE…ALRAITRYMT (172 aa)). Residues 375–378 (TYNT), threonine 387, and glutamate 452 each bind L-leucine.

Belongs to the sestrin family.

The protein resides in the nucleus. The protein localises to the cytoplasm. The catalysed reaction is a hydroperoxide + L-cysteinyl-[protein] = S-hydroxy-L-cysteinyl-[protein] + an alcohol. May function as an intracellular leucine sensor that negatively regulates the TORC1 signaling pathway through the GATOR complex. In absence of leucine, binds the GATOR subcomplex GATOR2 and prevents TORC1 signaling. Binding of leucine to SESN2 disrupts its interaction with GATOR2 thereby activating the TORC1 signaling pathway. This stress-inducible metabolic regulator may also play a role in protection against oxidative and genotoxic stresses. May prevent the accumulation of reactive oxygen species (ROS) through the alkylhydroperoxide reductase activity born by the N-terminal domain of the protein. This chain is Sestrin-1, found in Xenopus laevis (African clawed frog).